Reading from the N-terminus, the 391-residue chain is Succinate--CoA ligase [ADP-forming] subunit beta (391 aa).

Residues 9–247 (KDILAKYGVA…IAEEDPLEVE (239 aa)) form the ATP-grasp domain. ATP-binding positions include Lys-49, 56–58 (GRG), Glu-102, Ala-105, and Glu-110. Mg(2+) contacts are provided by Asn-202 and Asp-216. Substrate-binding positions include Asn-267 and 324 to 326 (GIL).

Belongs to the succinate/malate CoA ligase beta subunit family. As to quaternary structure, heterotetramer of two alpha and two beta subunits. It depends on Mg(2+) as a cofactor.

It carries out the reaction succinate + ATP + CoA = succinyl-CoA + ADP + phosphate. It catalyses the reaction GTP + succinate + CoA = succinyl-CoA + GDP + phosphate. It participates in carbohydrate metabolism; tricarboxylic acid cycle; succinate from succinyl-CoA (ligase route): step 1/1. Functionally, succinyl-CoA synthetase functions in the citric acid cycle (TCA), coupling the hydrolysis of succinyl-CoA to the synthesis of either ATP or GTP and thus represents the only step of substrate-level phosphorylation in the TCA. The beta subunit provides nucleotide specificity of the enzyme and binds the substrate succinate, while the binding sites for coenzyme A and phosphate are found in the alpha subunit. The sequence is that of Succinate--CoA ligase [ADP-forming] subunit beta from Acidobacterium capsulatum (strain ATCC 51196 / DSM 11244 / BCRC 80197 / JCM 7670 / NBRC 15755 / NCIMB 13165 / 161).